A 396-amino-acid chain; its full sequence is S-adenosylmethionine synthase (396 aa).

Position 16 (His-16) interacts with ATP. Asp-18 contacts Mg(2+). Glu-44 lines the K(+) pocket. L-methionine-binding residues include Glu-57 and Gln-100. The flexible loop stretch occupies residues Gln-100–Arg-110. Residues Asp-165–Lys-167, Asp-240, Arg-246–Lys-247, Ala-263, and Lys-267 each bind ATP. Asp-240 contributes to the L-methionine binding site. Lys-271 contacts L-methionine.

This sequence belongs to the AdoMet synthase family. As to quaternary structure, homotetramer; dimer of dimers. It depends on Mg(2+) as a cofactor. Requires K(+) as cofactor.

The protein localises to the cytoplasm. It catalyses the reaction L-methionine + ATP + H2O = S-adenosyl-L-methionine + phosphate + diphosphate. Its pathway is amino-acid biosynthesis; S-adenosyl-L-methionine biosynthesis; S-adenosyl-L-methionine from L-methionine: step 1/1. Functionally, catalyzes the formation of S-adenosylmethionine (AdoMet) from methionine and ATP. The overall synthetic reaction is composed of two sequential steps, AdoMet formation and the subsequent tripolyphosphate hydrolysis which occurs prior to release of AdoMet from the enzyme. The protein is S-adenosylmethionine synthase of Pseudomonas entomophila (strain L48).